Reading from the N-terminus, the 393-residue chain is MSGDFDTIRDASSSDEVQLVRLLEEKIKSLQIEIENLRKELNYYKAEMEKMLSPPLIEAVVLDVLPDGRVLVRSSSGPNLVVNVASHIDQKLIKPGVSVALNQRGSTILEVLPQKEDPIVKTMEIVEKPNVTYSEIGGLEEQIKELREVVELPLKKPEIFREIGVEPPKGVLLYGPPGTGKTMLAKAVATESNAVFIHVVASEFAQKFVGEGARIVRELFEMAKRKAPSIIFIDEIDAIGAKRIDIGTSGEREIQRTLMQLLAELDGFNPLDNVKIIAATNRIDILDPALLRPGRFDRIIEVPLPDFRGRTEIFNIYLKKMKVEDNINLELLSQLSEGFSGADIKNVCVEAAYMAIRDGRNKVTMKDLVDAITKINVKRNNMESMKERREKYS.

A coiled-coil region spans residues 14-53; the sequence is SDEVQLVRLLEEKIKSLQIEIENLRKELNYYKAEMEKMLS. ATP is bound by residues 178–183 and tyrosine 317; that span reads GTGKTM. The docks into pockets in the proteasome alpha-ring to cause gate opening stretch occupies residues 391 to 393; the sequence is KYS.

Belongs to the AAA ATPase family. In terms of assembly, homohexamer. The hexameric complex has a two-ring architecture resembling a top hat that caps the 20S proteasome core at one or both ends. Upon ATP-binding, the C-terminus of PAN interacts with the alpha-rings of the proteasome core by binding to the intersubunit pockets.

The protein resides in the cytoplasm. Its function is as follows. ATPase which is responsible for recognizing, binding, unfolding and translocation of substrate proteins into the archaeal 20S proteasome core particle. Is essential for opening the gate of the 20S proteasome via an interaction with its C-terminus, thereby allowing substrate entry and access to the site of proteolysis. Thus, the C-termini of the proteasomal ATPase function like a 'key in a lock' to induce gate opening and therefore regulate proteolysis. Unfolding activity requires energy from ATP hydrolysis, whereas ATP binding alone promotes ATPase-20S proteasome association which triggers gate opening, and supports translocation of unfolded substrates. The protein is Proteasome-activating nucleotidase of Saccharolobus islandicus (strain M.16.27) (Sulfolobus islandicus).